Consider the following 202-residue polypeptide: MANKFETIEAANRTEFGKGSARRARVAGLVPAVVYGADMESNLHITLNHRDFAGLVRRNGVNAVMELDVEGVKQLAMIKHIDQNVLTFNIDHVDLLAITRGEKVEVEIPVIVEGQPAPNTMFVQDADTIRVEADALNIPEEIVVSIEGMELGSQITAGDIKLDDDMTLVDDAELLIANVVLPAVEEAPAEDEEGESEGESEA.

Belongs to the bacterial ribosomal protein bL25 family. CTC subfamily. In terms of assembly, part of the 50S ribosomal subunit; part of the 5S rRNA/L5/L18/L25 subcomplex. Contacts the 5S rRNA. Binds to the 5S rRNA independently of L5 and L18.

In terms of biological role, this is one of the proteins that binds to the 5S RNA in the ribosome where it forms part of the central protuberance. The chain is Large ribosomal subunit protein bL25 from Corynebacterium efficiens (strain DSM 44549 / YS-314 / AJ 12310 / JCM 11189 / NBRC 100395).